We begin with the raw amino-acid sequence, 101 residues long: Large ribosomal subunit protein uL23 (101 aa).

This sequence belongs to the universal ribosomal protein uL23 family. Part of the 50S ribosomal subunit. Contacts protein L29, and trigger factor when it is bound to the ribosome.

Functionally, one of the early assembly proteins it binds 23S rRNA. One of the proteins that surrounds the polypeptide exit tunnel on the outside of the ribosome. Forms the main docking site for trigger factor binding to the ribosome. The chain is Large ribosomal subunit protein uL23 from Pseudarthrobacter chlorophenolicus (strain ATCC 700700 / DSM 12829 / CIP 107037 / JCM 12360 / KCTC 9906 / NCIMB 13794 / A6) (Arthrobacter chlorophenolicus).